A 571-amino-acid polypeptide reads, in one-letter code: Optineurin (571 aa).

Disordered regions lie at residues 1-32 (MSHQ…HPNL) and 100-144 (LSHE…DQLR). Positions 38-170 (EELLQQMKEL…VSELQLKLNS (133 aa)) form a coiled coil. An interaction with Rab8 region spans residues 58-209 (MKLNNQAMKG…GPTRTVSIGT (152 aa)). Positions 100–143 (LSHENEKLKEELGKLKGKSERSSEDPTDDSRLPRAEAEQEKDQL) are enriched in basic and acidic residues. The LIR signature appears at 176-181 (DSFVEI). Position 177 is a phosphoserine; by TBK1 (Ser177). Over residues 186–197 (GEAEGSVKEIKH) the composition is skewed to basic and acidic residues. 2 disordered regions span residues 186-210 (GEAE…IGTS) and 255-291 (VSDF…TVGS). At Ser198 the chain carries Phosphoserine. The span at 201 to 210 (PTRTVSIGTS) shows a compositional bias: polar residues. Residues 233-502 (CLREGNQKVE…LLKENDAFED (270 aa)) adopt a coiled-coil conformation. 2 stretches are compositionally biased toward basic and acidic residues: residues 255–268 (VSDF…RSEI) and 275–286 (STEKENEEEKGP). Residue Ser336 is modified to Phosphoserine. Residues 405–571 (TRKESEKVDR…LQIHVMDCII (167 aa)) are interaction with HD. The segment at 406 to 514 (RKESEKVDRA…RQSLMEMQSR (109 aa)) is interaction with MYO6. A UBAN motif is present at residues 468 to 473 (DFHAER). Ser520 carries the phosphoserine modification. A CCHC NOA-type zinc finger spans residues 541–571 (QRNIPIHSCPKCGEVLPDIDTLQIHVMDCII). Zn(2+) is bound by residues Cys549, Cys552, His565, and Cys569.

As to quaternary structure, self-associates. Interacts with HD. Interacts with GTF3A. Interacts with MYO6. Interacts (via UBAN) with ubiquitinated TFRC. Interacts with GTP-bound Rab8 (RAB8A and/or RAB8B). Interacts with TBC1D17. Interacts with TBK1. Interacts with TRAF3. Binds to linear ubiquitin chains. Interacts with LC3 family members MAP1LC3A, MAP1LC3B, GABARAP, GABARAPL1 and GABARAPL2; OPTN phosphorylation increases the association (at least with MAP1LC3B). Interacts with RAB12; the interaction may be indirect. Interacts with TBK1; this interaction leads to the Golgi localization of TBK1 and its subsequent activation. Interacts with palmitoyltransferase ZDHHC17/HIP14; the interaction does not lead to palmitoylation of OPTN. Interacts with CYLD. Interacts with TOM1; the interaction is indirect and is mediated by MYO6, which acts as a bridge between TOM1 and OPTN. Interacts with USP12; the interaction is independent of USP12 deubiquitinase activity and may be involved in regulation of autophagic flux. In terms of processing, phosphorylated by TBK1, leading to restrict bacterial proliferation in case of infection. In terms of tissue distribution, present in aqueous humor of the eye (at protein level).

It localises to the cytoplasm. Its subcellular location is the perinuclear region. The protein localises to the golgi apparatus. The protein resides in the trans-Golgi network. It is found in the cytoplasmic vesicle. It localises to the autophagosome. Its subcellular location is the recycling endosome. Plays an important role in the maintenance of the Golgi complex, in membrane trafficking, in exocytosis, through its interaction with myosin VI and Rab8. Links myosin VI to the Golgi complex and plays an important role in Golgi ribbon formation. Negatively regulates the induction of IFNB in response to RNA virus infection. Plays a neuroprotective role in the eye and optic nerve. Probably part of the TNF-alpha signaling pathway that can shift the equilibrium toward induction of cell death. May act by regulating membrane trafficking and cellular morphogenesis via a complex that contains Rab8 and huntingtin (HD). Mediates the interaction of Rab8 with the probable GTPase-activating protein TBC1D17 during Rab8-mediated endocytic trafficking, such as that of transferrin receptor (TFRC/TfR); regulates Rab8 recruitment to tubules emanating from the endocytic recycling compartment. Autophagy receptor that interacts directly with both the cargo to become degraded and an autophagy modifier of the MAP1 LC3 family; targets ubiquitin-coated bacteria (xenophagy) and appears to function in the same pathway as SQSTM1 and CALCOCO2/NDP52. This Macaca mulatta (Rhesus macaque) protein is Optineurin (OPTN).